The chain runs to 190 residues: Probable RNA-binding protein 18 (190 aa).

Positions 25-106 (HRLWIGNLDP…KKLVVRWAHA (82 aa)) constitute an RRM domain. Residues 166–190 (VYSYFKPPDKKRTTPYSRTAWKSRR) are disordered.

In Bos taurus (Bovine), this protein is Probable RNA-binding protein 18 (RBM18).